The sequence spans 284 residues: Bifunctional protein FolD (284 aa).

NADP(+) is bound by residues glycine 165–serine 167, serine 190, and isoleucine 231.

It belongs to the tetrahydrofolate dehydrogenase/cyclohydrolase family. In terms of assembly, homodimer.

It catalyses the reaction (6R)-5,10-methylene-5,6,7,8-tetrahydrofolate + NADP(+) = (6R)-5,10-methenyltetrahydrofolate + NADPH. The enzyme catalyses (6R)-5,10-methenyltetrahydrofolate + H2O = (6R)-10-formyltetrahydrofolate + H(+). The protein operates within one-carbon metabolism; tetrahydrofolate interconversion. In terms of biological role, catalyzes the oxidation of 5,10-methylenetetrahydrofolate to 5,10-methenyltetrahydrofolate and then the hydrolysis of 5,10-methenyltetrahydrofolate to 10-formyltetrahydrofolate. This Clostridium kluyveri (strain ATCC 8527 / DSM 555 / NBRC 12016 / NCIMB 10680 / K1) protein is Bifunctional protein FolD.